Reading from the N-terminus, the 430-residue chain is Histidine--tRNA ligase (430 aa).

It belongs to the class-II aminoacyl-tRNA synthetase family. As to quaternary structure, homodimer.

It is found in the cytoplasm. The enzyme catalyses tRNA(His) + L-histidine + ATP = L-histidyl-tRNA(His) + AMP + diphosphate + H(+). This is Histidine--tRNA ligase from Chlorobium luteolum (strain DSM 273 / BCRC 81028 / 2530) (Pelodictyon luteolum).